The primary structure comprises 158 residues: DNA-binding transcriptional repressor RacR (158 aa).

Homooctamer.

In terms of biological role, transcriptional regulator that represses the expression of ydaS and ydaT under normal physiological conditions. It binds to its own upstream sequence and represses the adjacent and divergently coded ydaS-ydaT operon. RacR-mediated down-regulation of ydaS and ydaT may be critical for cell survival. RacR ensures that the prophage DNA is maintained in the genome. When the expression of the racR gene is reduced, the prophage Rac is excised from the genome, possibly to counteract the lethal toxicity of YdaT. The chain is DNA-binding transcriptional repressor RacR (racR) from Escherichia coli (strain K12).